The following is a 661-amino-acid chain: Kyphoscoliosis peptidase (661 aa).

The disordered stretch occupies residues 116 to 137; it reads GDKNGNMRPRQPGGKDAHAYPW. Residues Cys225, His267, and Asp282 contribute to the active site.

The protein belongs to the transglutaminase-like superfamily. As to quaternary structure, interacts with IGFN1 and FLNC. Specifically expressed in skeletal and cardiac muscle.

Its subcellular location is the cytoplasm. The protein resides in the cytoskeleton. It is found in the myofibril. The protein localises to the sarcomere. It localises to the z line. Probable cytoskeleton-associated protease required for normal muscle growth. Involved in function, maturation and stabilization of the neuromuscular junction. May act by cleaving muscle-specific proteins such as FLNC. This is Kyphoscoliosis peptidase from Mus musculus (Mouse).